A 205-amino-acid polypeptide reads, in one-letter code: Recombination protein RecR (205 aa).

The C4-type zinc-finger motif lies at 60-75; that stretch reads CKVCHNISDTETCRIC. One can recognise a Toprim domain in the interval 83–178; sequence STICVVESIR…KLSVIARGIS (96 aa).

It belongs to the RecR family.

In terms of biological role, may play a role in DNA repair. It seems to be involved in an RecBC-independent recombinational process of DNA repair. It may act with RecF and RecO. The chain is Recombination protein RecR from Phocaeicola vulgatus (strain ATCC 8482 / DSM 1447 / JCM 5826 / CCUG 4940 / NBRC 14291 / NCTC 11154) (Bacteroides vulgatus).